A 266-amino-acid polypeptide reads, in one-letter code: MKTITKIAIQKRAGRYSIELDNQFAFGVAESVLIKYGLAKGRTLDEDLITQIKYDDAIAKALTIALNYLGHALRTTKQIKQKMRDKAVDEDIQAQVIAQLTQLGYVDDQNYANHYVATKKLITPKGPHVIRLALQQAGVAENMIEQALATYTFDEQCSIATKIAEKLAQGYQRESTRLRQQKMVQGLVNKGFSFETAQLVVDSMNIDNNAEDEQNNAKRQAEKLWHRYRHDESQQRFYKVKRQLYAKGFTSELIDAALLSLEQEEV.

This sequence belongs to the RecX family.

Its subcellular location is the cytoplasm. Its function is as follows. Modulates RecA activity. In Leuconostoc citreum (strain KM20), this protein is Regulatory protein RecX.